A 500-amino-acid chain; its full sequence is Pentatricopeptide repeat-containing protein At1g06580 (500 aa).

PPR repeat units lie at residues 78-112, 113-147, 148-182, 183-217, 218-252, 253-287, 288-322, 323-357, 358-392, 393-427, 428-462, and 463-498; these read SIVD…GISH, DLYS…GFEP, SIVT…GYEP, NVVI…GIRP, DVVT…GISP, DVIT…SVNP, NIVT…GFFP, NAVT…GVDG, DTFT…GVHP, DMYT…KTVV, GIIT…GVSP, and DVIT…GLMP.

It belongs to the PPR family. P subfamily.

In Arabidopsis thaliana (Mouse-ear cress), this protein is Pentatricopeptide repeat-containing protein At1g06580.